We begin with the raw amino-acid sequence, 580 residues long: Nuclear body protein SP140-like protein (580 aa).

One can recognise an HSR domain in the interval 33-149; that stretch reads SLQRLFTEDQ…IYKSFKNAIQ (117 aa). A disordered region spans residues 155-293; it reads QESDRKEREE…RSRASRKHKD (139 aa). Basic and acidic residues predominate over residues 156-170; that stretch reads ESDRKEREERPDIKL. K169 is covalently cross-linked (Glycyl lysine isopeptide (Lys-Gly) (interchain with G-Cter in SUMO2)). A Phosphoserine modification is found at S180. The segment covering 207-219 has biased composition (basic residues); the sequence is KPKRKRRKKKGHG. The segment covering 224–236 has biased composition (polar residues); sequence GTRTQKNNQQNDN. Basic residues predominate over residues 280–290; the sequence is QKRVRSRASRK. K292 is covalently cross-linked (Glycyl lysine isopeptide (Lys-Gly) (interchain with G-Cter in SUMO2)). The SAND domain occupies 293 to 374; that stretch reads DETVDFQAPL…RRLMEEGSLP (82 aa). The PHD-type zinc-finger motif lies at 403-449; it reads LDECEVCRDGGELFCCDTCSRVFHEDCHIPPVESEKTPWNCIFCRMK. Residues 467 to 570 enclose the Bromo domain; the sequence is QMCPEEQLKC…AEFEKDFKEV (104 aa).

This is Nuclear body protein SP140-like protein (SP140L) from Homo sapiens (Human).